The following is a 207-amino-acid chain: Large ribosomal subunit protein uL4 (207 aa).

Positions 56–75 are disordered; that stretch reads EVSGTTKKPFKQKGTGNARQ.

This sequence belongs to the universal ribosomal protein uL4 family. In terms of assembly, part of the 50S ribosomal subunit.

Its function is as follows. One of the primary rRNA binding proteins, this protein initially binds near the 5'-end of the 23S rRNA. It is important during the early stages of 50S assembly. It makes multiple contacts with different domains of the 23S rRNA in the assembled 50S subunit and ribosome. In terms of biological role, forms part of the polypeptide exit tunnel. This chain is Large ribosomal subunit protein uL4, found in Rickettsia prowazekii (strain Madrid E).